The primary structure comprises 197 residues: NADH-quinone oxidoreductase subunit B (197 aa).

Residues Cys76, Cys77, Cys141, and Cys171 each contribute to the [4Fe-4S] cluster site.

It belongs to the complex I 20 kDa subunit family. In terms of assembly, NDH-1 is composed of 14 different subunits. Subunits NuoB, C, D, E, F, and G constitute the peripheral sector of the complex. [4Fe-4S] cluster is required as a cofactor.

It localises to the cell inner membrane. The catalysed reaction is a quinone + NADH + 5 H(+)(in) = a quinol + NAD(+) + 4 H(+)(out). Its function is as follows. NDH-1 shuttles electrons from NADH, via FMN and iron-sulfur (Fe-S) centers, to quinones in the respiratory chain. The immediate electron acceptor for the enzyme in this species is believed to be ubiquinone. Couples the redox reaction to proton translocation (for every two electrons transferred, four hydrogen ions are translocated across the cytoplasmic membrane), and thus conserves the redox energy in a proton gradient. This is NADH-quinone oxidoreductase subunit B from Methylobacterium nodulans (strain LMG 21967 / CNCM I-2342 / ORS 2060).